The following is a 558-amino-acid chain: Dihydroxy-acid dehydratase (558 aa).

C50 contacts [2Fe-2S] cluster. D82 serves as a coordination point for Mg(2+). C123 is a binding site for [2Fe-2S] cluster. The Mg(2+) site is built by D124 and K125. N6-carboxylysine is present on K125. C195 is a [2Fe-2S] cluster binding site. E447 is a Mg(2+) binding site. S472 serves as the catalytic Proton acceptor.

This sequence belongs to the IlvD/Edd family. Homodimer. Requires [2Fe-2S] cluster as cofactor. It depends on Mg(2+) as a cofactor.

It carries out the reaction (2R)-2,3-dihydroxy-3-methylbutanoate = 3-methyl-2-oxobutanoate + H2O. The enzyme catalyses (2R,3R)-2,3-dihydroxy-3-methylpentanoate = (S)-3-methyl-2-oxopentanoate + H2O. The protein operates within amino-acid biosynthesis; L-isoleucine biosynthesis; L-isoleucine from 2-oxobutanoate: step 3/4. It participates in amino-acid biosynthesis; L-valine biosynthesis; L-valine from pyruvate: step 3/4. Functionally, functions in the biosynthesis of branched-chain amino acids. Catalyzes the dehydration of (2R,3R)-2,3-dihydroxy-3-methylpentanoate (2,3-dihydroxy-3-methylvalerate) into 2-oxo-3-methylpentanoate (2-oxo-3-methylvalerate) and of (2R)-2,3-dihydroxy-3-methylbutanoate (2,3-dihydroxyisovalerate) into 2-oxo-3-methylbutanoate (2-oxoisovalerate), the penultimate precursor to L-isoleucine and L-valine, respectively. This chain is Dihydroxy-acid dehydratase, found in Saccharolobus islandicus (strain M.16.27) (Sulfolobus islandicus).